Reading from the N-terminus, the 205-residue chain is GTP cyclohydrolase-2 (205 aa).

Residue 49-53 (RLHSE) coordinates GTP. Residues Cys54, Cys65, and Cys67 each coordinate Zn(2+). GTP contacts are provided by residues Gln70, 92 to 94 (EGR), and Thr114. Asp126 functions as the Proton acceptor in the catalytic mechanism. Catalysis depends on Arg128, which acts as the Nucleophile. Thr149 and Lys154 together coordinate GTP.

Belongs to the GTP cyclohydrolase II family. It depends on Zn(2+) as a cofactor.

It carries out the reaction GTP + 4 H2O = 2,5-diamino-6-hydroxy-4-(5-phosphoribosylamino)-pyrimidine + formate + 2 phosphate + 3 H(+). It functions in the pathway cofactor biosynthesis; riboflavin biosynthesis; 5-amino-6-(D-ribitylamino)uracil from GTP: step 1/4. Functionally, catalyzes the conversion of GTP to 2,5-diamino-6-ribosylamino-4(3H)-pyrimidinone 5'-phosphate (DARP), formate and pyrophosphate. This is GTP cyclohydrolase-2 from Pseudomonas putida (strain W619).